A 667-amino-acid polypeptide reads, in one-letter code: Polypeptide N-acetylgalactosaminyltransferase 3 (667 aa).

The Cytoplasmic portion of the chain corresponds to 1 to 12 (MGLRFQQLKKLW). Residues 13 to 35 (LLYLFLLFFAFFMFAISINLYVA) form a helical; Signal-anchor for type II membrane protein membrane-spanning segment. Topologically, residues 36-667 (SIQGGDAEMR…WGFIPLPWRM (632 aa)) are lumenal. 2 N-linked (GlcNAc...) asparagine glycosylation sites follow: asparagine 75 and asparagine 129. 5 disulfides stabilise this stretch: cysteine 140–cysteine 375, cysteine 366–cysteine 446, cysteine 526–cysteine 547, cysteine 572–cysteine 601, and cysteine 626–cysteine 649. The tract at residues 149 to 259 (LPSTSVIIVF…RGWLEPLLSR (111 aa)) is catalytic subdomain A. The substrate site is built by aspartate 190 and arginine 220. Residues aspartate 243 and histidine 245 each contribute to the Mn(2+) site. Asparagine 279 and asparagine 313 each carry an N-linked (GlcNAc...) asparagine glycan. Positions 321-383 (PIATPGMAGG…PCSHVGHVFR (63 aa)) are catalytic subdomain B. Tryptophan 352 is a binding site for substrate. Histidine 380 is a binding site for Mn(2+). Arginine 383 and tyrosine 388 together coordinate substrate. N-linked (GlcNAc...) asparagine glycosylation is present at asparagine 433. A Ricin B-type lectin domain is found at 513 to 661 (EELMALIDLE…KDITQKWGFI (149 aa)). The N-linked (GlcNAc...) asparagine glycan is linked to asparagine 590.

The protein belongs to the glycosyltransferase 2 family. GalNAc-T subfamily. The cofactor is Mn(2+). As to expression, expressed in developing oocytes and egg chambers. During embryonic stages 9-11, expressed in the primordiums of the foregut, midgut and hindgut. During embryonic stages 12-13, expression is found uniquely in the posterior spiracle. During embryonic stages 14-17, expressed in the pharynx, esophagus and posterior spiracles. Expression observed in the epidermis during embryonic stages 16-17. In third instar larvae, expressed ubiquitously in wing, with increased expression in pleura and notum, eye-antennal, leg and haltere imaginal disks.

The protein localises to the golgi apparatus membrane. It carries out the reaction L-seryl-[protein] + UDP-N-acetyl-alpha-D-galactosamine = a 3-O-[N-acetyl-alpha-D-galactosaminyl]-L-seryl-[protein] + UDP + H(+). It catalyses the reaction L-threonyl-[protein] + UDP-N-acetyl-alpha-D-galactosamine = a 3-O-[N-acetyl-alpha-D-galactosaminyl]-L-threonyl-[protein] + UDP + H(+). It participates in protein modification; protein glycosylation. Catalyzes the initial reaction in O-linked oligosaccharide biosynthesis, the transfer of an N-acetyl-D-galactosamine residue to a serine or threonine residue on the protein receptor. It can both act as a peptide transferase that transfers GalNAc onto unmodified peptide substrates, and as a glycopeptide transferase that requires the prior addition of a GalNAc on a peptide before adding additional GalNAc moieties. Prefers EA2 as substrate. Has weak activity toward Muc5AC-3, -13 and -3/13 substrates. Plays a critical role in the regulation of integrin-mediated cell adhesion during wing development by influencing, via glycosylation, the secretion and localization of the integrin ligand Tig to the basal cell layer interface. Might have a role in protein O-glycosylation in the Golgi and thereby in establishing and/or maintaining a proper secretory apparatus structure. Together with Pgant35A, regulates integrin levels and activity-dependent integrin signaling at the synapse in neurons and muscles. This Drosophila melanogaster (Fruit fly) protein is Polypeptide N-acetylgalactosaminyltransferase 3.